The following is a 441-amino-acid chain: GTPase Der (441 aa).

EngA-type G domains lie at 4 to 168 (PVVA…PEDI) and 177 to 352 (IRIA…EQNS). GTP contacts are provided by residues 10-17 (GRPNVGKS), 57-61 (DTGGI), 121-124 (NKVE), 183-190 (GRPNVGKS), 230-234 (DTAGM), and 295-298 (NKWD). The region spanning 353 to 437 (TRVATATLNT…PIRMIVRQKD (85 aa)) is the KH-like domain.

Belongs to the TRAFAC class TrmE-Era-EngA-EngB-Septin-like GTPase superfamily. EngA (Der) GTPase family. In terms of assembly, associates with the 50S ribosomal subunit.

GTPase that plays an essential role in the late steps of ribosome biogenesis. This is GTPase Der from Desulfitobacterium hafniense (strain DSM 10664 / DCB-2).